Consider the following 1581-residue polypeptide: Mediator of RNA polymerase II transcription subunit 1 (1581 aa).

The interaction with the Mediator complex and THRA stretch occupies residues 1-670; it reads MKAQGETEES…YGSSPLERQN (670 aa). The interval 16-590 is interaction with ESR1; it reads MSSLLERLHA…SIKDRHESVG (575 aa). Interaction with the Mediator complex regions lie at residues 108-212 and 215-390; these read FYVE…GYLT and SGGH…SLQG. The interaction with THRA stretch occupies residues 405-644; that stretch reads PLILNLIRHQ…MAGNTKNHPM (240 aa). An interaction with VDR region spans residues 542 to 789; sequence PASSPGYGMT…TDILSDIAEE (248 aa). Ser588 carries the phosphoserine modification. An LXXLL motif 1 motif is present at residues 604-608; that stretch reads LTSLL. Disordered stretches follow at residues 609–705, 792–820, 874–893, and 948–1566; these read QITG…HQTE, KLPSTSDDCPAIGTPLRDSSSSGHSQSTL, SQSGFGEEYFDESSQSGDND, and EHHS…DFMI. A compositionally biased stretch (pro residues) spans 622–632; that stretch reads PTPPHHTPPPV. The interaction with PPARGC1A and THRA stretch occupies residues 622-701; that stretch reads PTPPHHTPPP…SSRLPPEKPK (80 aa). An LXXLL motif 2 motif is present at residues 645-649; sequence LMNLL. Over residues 655–675 the composition is skewed to polar residues; it reads QDFSTLYGSSPLERQNSSSGS. The interval 656-1066 is interaction with ESR1; sequence DFSTLYGSSP…TPPIPKITIQ (411 aa). Residue Ser664 is modified to Phosphoserine. Residues 681 to 715 form an interaction with GATA1 region; it reads CSGSNKTKKKKSSRLPPEKPKHQTEDDFQRELFSM. Residues 696-705 are compositionally biased toward basic and acidic residues; the sequence is PPEKPKHQTE. Position 795 is a phosphoserine (Ser795). Residue Thr805 is modified to Phosphothreonine. The segment covering 808–820 has biased composition (polar residues); it reads RDSSSSGHSQSTL. An Integrase domain-binding motif (IBM) motif is present at residues 875 to 902; sequence QSGFGEEYFDESSQSGDNDDFKGFASQA. 2 positions are modified to phosphoserine: Ser887 and Ser953. Residues 963–974 are compositionally biased toward basic and acidic residues; that stretch reads LGKEKTQKRVKE. Residue Thr1032 is modified to Phosphothreonine; by MAPK1 or MAPK3. Positions 1034–1045 are enriched in low complexity; it reads PTSTGGSKSPGS. Phosphothreonine occurs at positions 1051 and 1057. Composition is skewed to low complexity over residues 1078–1094 and 1101–1156; these read SSHSQYTSSGSVSSSGS and SSSS…PGSS. Phosphoserine is present on Ser1156. The segment covering 1162-1195 has biased composition (polar residues); the sequence is GLSSGSSSTKMKPQGKPSSLMNPSLSKPNISPSH. N6-acetyllysine is present on Lys1177. Phosphoserine is present on Ser1207. Phosphothreonine is present on Thr1215. Low complexity-rich tracts occupy residues 1218 to 1227 and 1234 to 1293; these read SSKAKSPISS and MSGT…SKGK. A Phosphoserine modification is found at Ser1223. The tract at residues 1249–1421 is interaction with TP53; that stretch reads LGSSGSLSQK…KPGESSGEGL (173 aa). A Phosphoserine modification is found at Ser1302. Polar residues predominate over residues 1330–1345; sequence GVSTNSSSHPMSSKHN. Ser1347 bears the Phosphoserine mark. A compositionally biased stretch (basic and acidic residues) spans 1352–1364; it reads QGKREKSDKDKSK. Ser1403 and Ser1433 each carry phosphoserine. 2 stretches are compositionally biased toward polar residues: residues 1425–1440 and 1448–1482; these read MASSKNYGSPLISGST and PSHSKSPAYTPQNLDSESESGSSIAEKSYQNSPSS. Thr1440 bears the Phosphothreonine mark. Phosphothreonine; by MAPK1 or MAPK3 is present on Thr1457. A phosphoserine mark is found at Ser1463, Ser1465, Ser1479, Ser1481, and Ser1482. The segment covering 1496-1505 has biased composition (basic residues); that stretch reads KHKKHKKEKK. The span at 1506 to 1522 shows a compositional bias: basic and acidic residues; sequence KVKDKDRDRDRDKDRDK. Lys1529 carries the N6-acetyllysine modification. Residues 1533–1552 show a composition bias toward polar residues; the sequence is WSKSPISSDQSLSMTSNTIL.

It belongs to the Mediator complex subunit 1 family. As to quaternary structure, component of the Mediator complex, which is composed of MED1, MED4, MED6, MED7, MED8, MED9, MED10, MED11, MED12, MED13, MED13L, MED14, MED15, MED16, MED17, MED18, MED19, MED20, MED21, MED22, MED23, MED24, MED25, MED26, MED27, MED29, MED30, MED31, CCNC, CDK8 and CDC2L6/CDK11. The MED12, MED13, CCNC and CDK8 subunits form a distinct module termed the CDK8 module. Mediator containing the CDK8 module is less active than Mediator lacking this module in supporting transcriptional activation. Individual preparations of the Mediator complex lacking one or more distinct subunits have been variously termed ARC, CRSP, DRIP, PC2, SMCC and TRAP. This subunit specifically interacts with a number of nuclear receptors in a ligand-dependent fashion including AR, ESR1, ESR2, PPARA, PPARG, RORA, RXRA, RXRG, THRA, THRB and VDR. Interacts with CTNNB1, GABPA, GLI3, PPARGC1A and TP53. Interacts with YWHAH. Interacts with CLOCK; this interaction requires the presence of THRAP3. Interacts with GATA1 and CCAR1. Interacts with NR4A3. Interacts (via IBM motif) with PSIP1 (via IBD domain); phosphorylation increases its affinity for PSIP1. Interacts with USP22. Phosphorylated by MAPK1 or MAPK3 during G2/M phase which may enhance protein stability and promote entry into the nucleolus. Phosphorylation increases its interaction with PSIP1. Ubiquitously expressed.

Its subcellular location is the nucleus. Functionally, component of the Mediator complex, a coactivator involved in the regulated transcription of nearly all RNA polymerase II-dependent genes. Mediator functions as a bridge to convey information from gene-specific regulatory proteins to the basal RNA polymerase II transcription machinery. Mediator is recruited to promoters by direct interactions with regulatory proteins and serves as a scaffold for the assembly of a functional preinitiation complex with RNA polymerase II and the general transcription factors. Acts as a coactivator for GATA1-mediated transcriptional activation during erythroid differentiation of K562 erythroleukemia cells. The protein is Mediator of RNA polymerase II transcription subunit 1 (MED1) of Homo sapiens (Human).